The following is a 122-amino-acid chain: Large ribosomal subunit protein uL18 (122 aa).

Residues 1–20 (MFKKVSKNANRLSRHQRVRN) form a disordered region.

It belongs to the universal ribosomal protein uL18 family. In terms of assembly, part of the 50S ribosomal subunit; part of the 5S rRNA/L5/L18/L25 subcomplex. Contacts the 5S and 23S rRNAs.

Its function is as follows. This is one of the proteins that bind and probably mediate the attachment of the 5S RNA into the large ribosomal subunit, where it forms part of the central protuberance. The protein is Large ribosomal subunit protein uL18 of Alkaliphilus oremlandii (strain OhILAs) (Clostridium oremlandii (strain OhILAs)).